The primary structure comprises 416 residues: Doublesex- and mab-3-related transcription factor A2 (416 aa).

Positions 25 to 72 form a DNA-binding region, DM; that stretch reads CARCRNHGVVSALKGHKRYCRWKDCMCAKCTLIAERQRVMAAQVALRR. The span at 131-154 shows a compositional bias: polar residues; the sequence is FSKGQLSGPTTPQQAAGKSASAES. The segment at 131 to 226 is disordered; it reads FSKGQLSGPT…PSPSSAASRH (96 aa). Over residues 197-207 the composition is skewed to low complexity; that stretch reads GSVSSIGSDSG. A DMA domain is found at 227–262; that stretch reads MNAIDILTRVFPSHKRSILELVLQGCGKDVVQAIEQ.

The protein belongs to the DMRT family.

Its subcellular location is the nucleus. Functionally, may be involved in sexual development. This is Doublesex- and mab-3-related transcription factor A2 (dmrta2) from Takifugu rubripes (Japanese pufferfish).